We begin with the raw amino-acid sequence, 931 residues long: Short transient receptor potential channel 6 (931 aa).

Residues 1–24 are disordered; that stretch reads MNQSPAAFGPRRGGSPAVVAGAGA. Topologically, residues 1 to 406 are cytoplasmic; sequence MNQSPAAFGP…GLRQQTMAVK (406 aa). Positions 13–24 are enriched in low complexity; sequence GGSPAVVAGAGA. ANK repeat units follow at residues 131 to 160, 162 to 188, and 217 to 246; these read MGQNALQLAVANEHLEITELLLKKENLSRV, DALLLAISKGYVRIVEAILSHPAFAEG, and HDVTPIILAAHCQEYEIVHTLLRKGARIER. A helical membrane pass occupies residues 407–427; the sequence is FLVVLAVAVGLPFLALVYWFA. The Extracellular segment spans residues 428–438; the sequence is PCSKMGKIMRG. A helical membrane pass occupies residues 439 to 459; sequence PFMKFVAHAASFTIFLGLLVM. Residues 460–487 lie on the Cytoplasmic side of the membrane; it reads NAADRFEGTKILPNETSTDHAKQLFRMK. A helical membrane pass occupies residues 488-508; the sequence is TSCFSWMEMLIISWVIGMIWA. At 509 to 521 the chain is on the extracellular side; the sequence is ECKEIWTQGPKEY. Residues 522–542 form a helical membrane-spanning segment; it reads LFELWNMLDFGMLAIFAASFI. The Cytoplasmic portion of the chain corresponds to 543 to 592; that stretch reads ARFMAFWHASKAQSIIDANDTLKDLTKVTLGDNVKYYNLARIKWDPSDPQ. A helical transmembrane segment spans residues 593 to 613; that stretch reads IISEGLYAIAVVLSFSRIAYI. Topologically, residues 614 to 636 are extracellular; that stretch reads LPANESFGPLQISLGRTVKDIFK. An N-linked (GlcNAc...) asparagine glycan is attached at asparagine 617. The ANK 4 repeat unit spans residues 618–647; that stretch reads ESFGPLQISLGRTVKDIFKFMVIFIMVFVA. The chain crosses the membrane as a helical span at residues 637–657; sequence FMVIFIMVFVAFMIGMFNLYS. The Cytoplasmic segment spans residues 658-674; it reads YYIGAKQNEAFTTVEES. The chain crosses the membrane as a helical span at residues 675–695; it reads FKTLFWAIFGLSEVKSVVINY. Residues 696–706 lie on the Extracellular side of the membrane; it reads NHKFIENIGYV. Residues 707 to 727 form a helical membrane-spanning segment; sequence LYGVYNVTMVIVLLNMLIAMI. Over 728 to 931 the chain is Cytoplasmic; the sequence is NSSFQEIEDD…MEPNQEESNR (204 aa). Serine 815 is subject to Phosphoserine.

The protein belongs to the transient receptor (TC 1.A.4) family. STrpC subfamily. TRPC6 sub-subfamily. As to quaternary structure, homodimer; forms channel complex. Interacts with MX1 and RNF24. Post-translationally, phosphorylated by FYN, leading to an increase of TRPC6 channel activity.

Its subcellular location is the cell membrane. The enzyme catalyses Ca(2+)(in) = Ca(2+)(out). Thought to form a receptor-activated non-selective calcium permeant cation channel. Probably is operated by a phosphatidylinositol second messenger system activated by receptor tyrosine kinases or G-protein coupled receptors. Activated by diacylglycerol (DAG) in a membrane-delimited fashion, independently of protein kinase C. Seems not to be activated by intracellular calcium store depletion. This chain is Short transient receptor potential channel 6, found in Bos taurus (Bovine).